Reading from the N-terminus, the 348-residue chain is MVEGESKALWIILATVFAVAAVAPAVHGQQTPCYFVFGDSVFDNGNNNALNTKAKVNYLPYGIDYFQGPTGRFSNGRNIPDVIAELAGFNNPIPPFAGASQAQANIGLNYASGAGGIREETSENMGERISLRQQVNNHFSAIITAAVPLSRLRQCLYTINIGSNDYLNNYFLSPPTLARRLFNPDQYARSLISLYRIYLTQLYVLGARNVALFGIGKIGCTPRIVATLGGGTGCAEEVNQAVIIFNTKLKALVTDFNNKPGAMFTYVDLFSGNAEDFAALGITVGDRSCCTVNPGEELCAANGPVCPDRNKFIFWDNVHTTEVINTVVANAAFNGPIASPFNISQLVN.

The signal sequence occupies residues 1–28 (MVEGESKALWIILATVFAVAAVAPAVHG). Ser-40 acts as the Nucleophile in catalysis. Residues Asp-316 and His-319 contribute to the active site. N-linked (GlcNAc...) asparagine glycosylation is present at Asn-342.

This sequence belongs to the 'GDSL' lipolytic enzyme family.

It localises to the secreted. The sequence is that of GDSL esterase/lipase At4g30140 from Arabidopsis thaliana (Mouse-ear cress).